Reading from the N-terminus, the 538-residue chain is Carboxypeptidase 2 (538 aa).

An N-terminal signal peptide occupies residues 1–21 (MVAYRFLTLISLGLGSHCVSA). Asn-46 is a glycosylation site (N-linked (GlcNAc...) asparagine). The tract at residues 53 to 76 (PAFTSPGTVSRGFSDGTSGPTRDE) is disordered. Residues 71 to 351 (GPTRDETMEG…VMAKSVLQTA (281 aa)) form the Peptidase M14 domain. Residues His-136, Glu-139, and His-224 each coordinate Zn(2+). The Proton donor/acceptor role is filled by Glu-322. N-linked (GlcNAc...) asparagine glycans are attached at residues Asn-393 and Asn-459.

The protein belongs to the peptidase M14 family. Zn(2+) is required as a cofactor.

The protein resides in the secreted. In terms of biological role, extracellular metalloprotease that contributes to pathogenicity. The polypeptide is Carboxypeptidase 2 (MCPB) (Trichophyton rubrum (Athlete's foot fungus)).